The following is a 345-amino-acid chain: Olfactory receptor 11G2 (345 aa).

At 1 to 62 (MHFLSQNDLN…LGFPCPREGQ (62 aa)) the chain is on the extracellular side. The N-linked (GlcNAc...) asparagine glycan is linked to N43. The chain crosses the membrane as a helical span at residues 63–83 (ILLFVLFTVVYLLTLMGNGSI). At 84–92 (ICAVHWDQR) the chain is on the cytoplasmic side. A helical membrane pass occupies residues 93-113 (LHAPMYILLANFSFLEICYVT). Residues 114–135 (STVPSMLANFLSDTKIISFSGC) are Extracellular-facing. A disulfide bond links C135 and C217. The chain crosses the membrane as a helical span at residues 136-156 (FLQFYFFFSLGSTECFFLAVM). Over 157-181 (AFDRYLAICRPLRYPTIMTRRLCTN) the chain is Cytoplasmic. A helical transmembrane segment spans residues 182 to 202 (LVVNCWVLGFIWFLIPIVNIS). Residues 203 to 241 (QMSFCGSRIIDHFLCDPAPLLTLTCKKGPVIELVFSVLS) are Extracellular-facing. The helical transmembrane segment at 242–264 (PLPVFMLFLFIVGSYALVVRAVL) threads the bilayer. The Cytoplasmic portion of the chain corresponds to 265–275 (RVPSAAGRRKA). A helical membrane pass occupies residues 276-296 (FSTCGSHLAVVSLFYGSVLVM). Residues 297-309 (YGSPPSKNEAGKQ) are Extracellular-facing. Residues 310-330 (KTVTLFYSVVTPLLNPVIYSL) form a helical membrane-spanning segment. Topologically, residues 331 to 345 (RNKDMRKALKKFWGT) are cytoplasmic.

The protein belongs to the G-protein coupled receptor 1 family.

The protein localises to the cell membrane. Its function is as follows. Odorant receptor. The protein is Olfactory receptor 11G2 (OR11G2) of Homo sapiens (Human).